We begin with the raw amino-acid sequence, 260 residues long: Hemin import ATP-binding protein HmuV (260 aa).

Residues 3-239 form the ABC transporter domain; that stretch reads LHAQQISLSI…QRLSEVYGCD (237 aa). Position 35 to 42 (35 to 42) interacts with ATP; the sequence is GPNGSGKS.

This sequence belongs to the ABC transporter superfamily. Heme (hemin) importer (TC 3.A.1.14.5) family. The complex is composed of two ATP-binding proteins (HmuV), two transmembrane proteins (HmuU) and a solute-binding protein (HmuT).

It is found in the cell inner membrane. Part of the ABC transporter complex HmuTUV involved in hemin import. Responsible for energy coupling to the transport system. The chain is Hemin import ATP-binding protein HmuV from Ruegeria sp. (strain TM1040) (Silicibacter sp.).